Consider the following 100-residue polypeptide: Small ribosomal subunit protein bS18 (100 aa).

The interval Met-1–Arg-23 is disordered.

Belongs to the bacterial ribosomal protein bS18 family. As to quaternary structure, part of the 30S ribosomal subunit. Forms a tight heterodimer with protein bS6.

In terms of biological role, binds as a heterodimer with protein bS6 to the central domain of the 16S rRNA, where it helps stabilize the platform of the 30S subunit. The polypeptide is Small ribosomal subunit protein bS18 (Endomicrobium trichonymphae).